The following is a 133-amino-acid chain: Small ribosomal subunit protein uS8 (133 aa).

Belongs to the universal ribosomal protein uS8 family. Part of the 30S ribosomal subunit. Contacts proteins S5 and S12.

In terms of biological role, one of the primary rRNA binding proteins, it binds directly to 16S rRNA central domain where it helps coordinate assembly of the platform of the 30S subunit. The polypeptide is Small ribosomal subunit protein uS8 (Prochlorococcus marinus (strain MIT 9215)).